The following is a 324-amino-acid chain: tRNA dimethylallyltransferase (324 aa).

17–24 (GPTASGKT) is an ATP binding site. 19-24 (TASGKT) lines the substrate pocket. 4 interaction with substrate tRNA regions span residues 42–45 (DSAL), 166–170 (QRIQR), 251–256 (RCVGYR), and 284–291 (KRQITWLR).

Belongs to the IPP transferase family. As to quaternary structure, monomer. Requires Mg(2+) as cofactor.

It carries out the reaction adenosine(37) in tRNA + dimethylallyl diphosphate = N(6)-dimethylallyladenosine(37) in tRNA + diphosphate. In terms of biological role, catalyzes the transfer of a dimethylallyl group onto the adenine at position 37 in tRNAs that read codons beginning with uridine, leading to the formation of N6-(dimethylallyl)adenosine (i(6)A). The protein is tRNA dimethylallyltransferase of Burkholderia orbicola (strain MC0-3).